Reading from the N-terminus, the 443-residue chain is ATP-dependent protease ATPase subunit HslU (443 aa).

ATP-binding positions include Val18, 60–65, Asp256, Glu321, and Arg393; that span reads GVGKTE.

It belongs to the ClpX chaperone family. HslU subfamily. As to quaternary structure, a double ring-shaped homohexamer of HslV is capped on each side by a ring-shaped HslU homohexamer. The assembly of the HslU/HslV complex is dependent on binding of ATP.

The protein localises to the cytoplasm. Functionally, ATPase subunit of a proteasome-like degradation complex; this subunit has chaperone activity. The binding of ATP and its subsequent hydrolysis by HslU are essential for unfolding of protein substrates subsequently hydrolyzed by HslV. HslU recognizes the N-terminal part of its protein substrates and unfolds these before they are guided to HslV for hydrolysis. This Azoarcus sp. (strain BH72) protein is ATP-dependent protease ATPase subunit HslU.